A 168-amino-acid chain; its full sequence is Diphosphoinositol polyphosphate phosphohydrolase 1 (168 aa).

Met1 is subject to N-acetylmethionine. Residues Arg10, 18–20, and 39–41 each bind substrate; these read KKR and SSR. Residues 17-142 enclose the Nudix hydrolase domain; sequence YKKRAACLCF…KPVQASYFEA (126 aa). Positions 50 and 66 each coordinate Mg(2+). The Nudix box signature appears at 51-72; sequence GGMEPEEEPSVAAVREVCEEAG. Glu69 (proton acceptor) is an active-site residue. A Mg(2+)-binding site is contributed by Glu70. Substrate-binding positions include 89 to 91, Arg115, and Lys133; that span reads RKH.

It belongs to the Nudix hydrolase family. DIPP subfamily. As to quaternary structure, monomer. Mg(2+) serves as cofactor. Requires Mn(2+) as cofactor. Zn(2+) is required as a cofactor.

The protein localises to the cytoplasm. It is found in the nucleus. It catalyses the reaction diphospho-myo-inositol polyphosphate + H2O = myo-inositol polyphosphate + phosphate.. It carries out the reaction 5-diphospho-1D-myo-inositol 1,2,3,4,6-pentakisphosphate + H2O = 1D-myo-inositol hexakisphosphate + phosphate + H(+). The catalysed reaction is 3,5-bis(diphospho)-1D-myo-inositol 1,2,4,6-tetrakisphosphate + H2O = 3-diphospho-1D-myo-inositol 1,2,4,5,6-pentakisphosphate + phosphate + 2 H(+). The enzyme catalyses [phosphate](n+1) + n H2O = (n+1) phosphate + n H(+). It catalyses the reaction P(1),P(5)-bis(5'-adenosyl) pentaphosphate + H2O = ADP + ATP + 2 H(+). It carries out the reaction P(1),P(6)-bis(5'-adenosyl) hexaphosphate + H2O = 2 ATP + 2 H(+). The catalysed reaction is P(1),P(4)-bis(5'-adenosyl) tetraphosphate + H2O = AMP + ATP + 2 H(+). The enzyme catalyses a 5'-end (N(7)-methyl 5'-triphosphoguanosine)-ribonucleoside in mRNA + H2O = N(7)-methyl-GMP + a 5'-end diphospho-ribonucleoside in mRNA + 2 H(+). It catalyses the reaction a 5'-end (N(7)-methyl 5'-triphosphoguanosine)-ribonucleoside in mRNA + H2O = N(7)-methyl-GDP + a 5'-end phospho-ribonucleoside in mRNA + 2 H(+). Its activity is regulated as follows. Diphosphoinositol polyphosphate phosphohydrolase is inhibited by fluoride and InsP6. Its function is as follows. Cleaves a beta-phosphate from the diphosphate groups in PP-InsP5 (diphosphoinositol pentakisphosphate) and [PP]2-InsP4 (bisdiphosphoinositol tetrakisphosphate), suggesting that it may play a role in signal transduction. InsP6 (inositol hexakisphosphate) is not a substrate. Acts as a negative regulator of the ERK1/2 pathway. Also able to catalyze the hydrolysis of dinucleoside oligophosphates, with diadenosine 5',5'''-P1,P6-hexaphosphate (Ap6A) and diadenosine 5',5'''- P1,P5-pentaphosphate (Ap5A) being the preferred substrates. The major reaction products are ADP and p4a from Ap6A and ADP and ATP from Ap5A. Also able to hydrolyze 5- phosphoribose 1-diphosphate. Acts as a decapping enzyme that can hydrolyze both monomethylated and unmethylated capped RNAs. Hydrolyzes monomethylated capped RNA after both the alpha- and beta-phosphates generating m7GMP + ppRNA and m7GDP + pRNA. Modulates the stability of a subset of mRNAs implicated in cell motility. Divalent cations zinc, magnesium and manganese determine its substrate specificity. Exhibits endopolyphosphatase activity in the presence of zinc ions. Exhibits diphosphoinositol polyphosphate phosphohydrolase in the presence of magnesium ions and diadenosine hexaphosphate hydrolase activity in the presence of manganese ions. Plays an important role in limiting DNA damage and maintaining cell survival upon oxidative stress via its endopolyphosphatase activity. This Rattus norvegicus (Rat) protein is Diphosphoinositol polyphosphate phosphohydrolase 1.